The chain runs to 121 residues: Large ribosomal subunit protein bL12 (121 aa).

This sequence belongs to the bacterial ribosomal protein bL12 family. As to quaternary structure, homodimer. Part of the ribosomal stalk of the 50S ribosomal subunit. Forms a multimeric L10(L12)X complex, where L10 forms an elongated spine to which 2 to 4 L12 dimers bind in a sequential fashion. Binds GTP-bound translation factors.

Functionally, forms part of the ribosomal stalk which helps the ribosome interact with GTP-bound translation factors. Is thus essential for accurate translation. This is Large ribosomal subunit protein bL12 from Pelagibacter ubique (strain HTCC1062).